Reading from the N-terminus, the 243-residue chain is Phosphate-specific transport system accessory protein PhoU (243 aa).

The protein belongs to the PhoU family. Homodimer.

The protein resides in the cytoplasm. Its function is as follows. Part of the phosphate (Pho) regulon, which plays a key role in phosphate homeostasis. Encoded together with proteins of the phosphate-specific transport (Pst) system in the polycistronic pstSCAB-phoU operon. PhoU is essential for the repression of the Pho regulon at high phosphate conditions. In this role, it may bind, possibly as a chaperone, to PhoR, PhoB or a PhoR-PhoB complex to promote dephosphorylation of phospho-PhoB, or inhibit formation of the PhoR-PhoB transitory complex. This chain is Phosphate-specific transport system accessory protein PhoU, found in Serratia marcescens.